The chain runs to 370 residues: Lysophosphatidic acid receptor 4 (370 aa).

Over Met1–Gly43 the chain is Extracellular. Residues Asn15, Asn24, and Asn28 are each glycosylated (N-linked (GlcNAc...) asparagine). The chain crosses the membrane as a helical span at residues Ala44–Phe64. Over Cys65 to Glu73 the chain is Cytoplasmic. Residues Thr74–Phe94 traverse the membrane as a helical segment. Residues Lys95–Lys112 lie on the Extracellular side of the membrane. A disulfide bridge connects residues Cys111 and Cys188. A helical transmembrane segment spans residues Ile113–Ser133. Residues Val134–Ser155 lie on the Cytoplasmic side of the membrane. Residues Ala156–Phe176 form a helical membrane-spanning segment. The Extracellular segment spans residues Ser177–Lys203. The N-linked (GlcNAc...) asparagine glycan is linked to Asn183. Residues Ile204–Ser224 traverse the membrane as a helical segment. At Ser225–His254 the chain is on the cytoplasmic side. Residues Met255 to Val275 form a helical membrane-spanning segment. Residues Arg276–Pro294 lie on the Extracellular side of the membrane. The helical transmembrane segment at Ile295–Leu315 threads the bilayer. The Cytoplasmic portion of the chain corresponds to Glu316–Phe370.

It belongs to the G-protein coupled receptor 1 family.

The protein localises to the cell membrane. In terms of biological role, receptor for lysophosphatidic acid (LPA), a mediator of diverse cellular activities. Transduces a signal by increasing the intracellular calcium ions and by stimulating adenylyl cyclase activity. The rank order of potency for agonists of this receptor is 1-oleoyl- &gt; 1-stearoyl- &gt; 1-palmitoyl- &gt; 1-myristoyl- &gt; 1-alkyl- &gt; 1-alkenyl-LPA. This is Lysophosphatidic acid receptor 4 (Lpar4) from Mus musculus (Mouse).